We begin with the raw amino-acid sequence, 360 residues long: Probable cinnamyl alcohol dehydrogenase 6 (360 aa).

Position 48 (Cys-48) interacts with Zn(2+). Thr-50 lines the NADP(+) pocket. Zn(2+)-binding residues include His-70, Glu-71, Cys-101, Cys-104, Cys-107, Cys-115, and Cys-164. NADP(+)-binding positions include Thr-168, 192-197 (GLGGLG), 215-220 (STSPAK), Thr-255, Gly-279, and 302-304 (SMT).

The protein belongs to the zinc-containing alcohol dehydrogenase family. As to quaternary structure, homodimer. Zn(2+) is required as a cofactor.

It catalyses the reaction (E)-cinnamyl alcohol + NADP(+) = (E)-cinnamaldehyde + NADPH + H(+). It carries out the reaction (E)-coniferol + NADP(+) = (E)-coniferaldehyde + NADPH + H(+). The enzyme catalyses (E)-sinapyl alcohol + NADP(+) = (E)-sinapaldehyde + NADPH + H(+). The catalysed reaction is (E)-4-coumaroyl alcohol + NADP(+) = (E)-4-coumaraldehyde + NADPH + H(+). It catalyses the reaction (E)-caffeyl alcohol + NADP(+) = (E)-caffeyl aldehyde + NADPH + H(+). It participates in aromatic compound metabolism; phenylpropanoid biosynthesis. Involved in lignin biosynthesis. Catalyzes the final step specific for the production of lignin monomers. Catalyzes the NADPH-dependent reduction of coniferaldehyde, 5-hydroxyconiferaldehyde, sinapaldehyde, 4-coumaraldehyde and caffeyl aldehyde to their respective alcohols. This Oryza sativa subsp. japonica (Rice) protein is Probable cinnamyl alcohol dehydrogenase 6.